The chain runs to 226 residues: Thiocyanate methyltransferase 1 (226 aa).

Tryptophan 35, tryptophan 39, tryptophan 46, and glycine 73 together coordinate S-adenosyl-L-methionine. Serine 85 carries the post-translational modification Phosphoserine. Residues aspartate 94, 122–123 (DF), and tyrosine 138 each bind S-adenosyl-L-methionine.

Belongs to the class I-like SAM-binding methyltransferase superfamily. TPMT family. Ubiquitous.

It catalyses the reaction thiocyanate + S-adenosyl-L-methionine = methyl thiocyanate + S-adenosyl-L-homocysteine. Functionally, S-adenosyl-L-methionine-dependent methyltransferase. Probably involved in glucosinolate metabolism and defense against phytopathogens. Highly reactive to thiocyanate (NCS(-)) derived from myrosinase-mediated hydrolysis of glucosinolates upon tissue damage. Also accepts halid ions as substrates with a lower affinity. This Brassica oleracea (Wild cabbage) protein is Thiocyanate methyltransferase 1 (TMT1).